The sequence spans 290 residues: Glycine--tRNA ligase alpha subunit (290 aa).

This sequence belongs to the class-II aminoacyl-tRNA synthetase family. As to quaternary structure, tetramer of two alpha and two beta subunits.

It is found in the cytoplasm. The enzyme catalyses tRNA(Gly) + glycine + ATP = glycyl-tRNA(Gly) + AMP + diphosphate. This chain is Glycine--tRNA ligase alpha subunit, found in Maridesulfovibrio salexigens (strain ATCC 14822 / DSM 2638 / NCIMB 8403 / VKM B-1763) (Desulfovibrio salexigens).